A 296-amino-acid chain; its full sequence is Pantothenate synthetase (296 aa).

Residue 37–44 (MGALHTGH) coordinates ATP. His44 functions as the Proton donor in the catalytic mechanism. Residue Gln68 coordinates (R)-pantoate. Gln68 contributes to the beta-alanine binding site. Residue 160–163 (GQKD) coordinates ATP. A (R)-pantoate-binding site is contributed by Gln166. ATP-binding positions include Val189 and 197-200 (TSSR).

The protein belongs to the pantothenate synthetase family. In terms of assembly, homodimer.

It is found in the cytoplasm. It carries out the reaction (R)-pantoate + beta-alanine + ATP = (R)-pantothenate + AMP + diphosphate + H(+). It participates in cofactor biosynthesis; (R)-pantothenate biosynthesis; (R)-pantothenate from (R)-pantoate and beta-alanine: step 1/1. Catalyzes the condensation of pantoate with beta-alanine in an ATP-dependent reaction via a pantoyl-adenylate intermediate. The polypeptide is Pantothenate synthetase (Thermobifida fusca (strain YX)).